The following is a 682-amino-acid chain: 1,4-alpha-glucan-branching enzyme (682 aa).

Residues Trp88 and Lys124 each coordinate (1,4-alpha-D-glucosyl)n. Residue Asp342 is the Nucleophile of the active site. The active-site Proton donor is Glu397.

The protein belongs to the glycosyl hydrolase 13 family. GlgB subfamily.

It is found in the cytoplasm. It carries out the reaction Transfers a segment of a (1-&gt;4)-alpha-D-glucan chain to a primary hydroxy group in a similar glucan chain.. The protein operates within glycan biosynthesis; glycogen biosynthesis. In terms of biological role, glycogen-branching enzyme participates in the glycogen biosynthetic process along with glycogenin and glycogen synthase. Generates alpha-1,6-glucosidic branches from alpha-1,4-linked glucose chains, to increase solubility of the glycogen polymer. The chain is 1,4-alpha-glucan-branching enzyme (GLC3) from Cryptococcus neoformans var. neoformans serotype D (strain B-3501A) (Filobasidiella neoformans).